The following is a 305-amino-acid chain: Orotidine 5'-phosphate decarboxylase (305 aa).

Residue K108 is the Proton donor of the active site.

This sequence belongs to the OMP decarboxylase family. Type 2 subfamily.

It catalyses the reaction orotidine 5'-phosphate + H(+) = UMP + CO2. It functions in the pathway pyrimidine metabolism; UMP biosynthesis via de novo pathway; UMP from orotate: step 2/2. The polypeptide is Orotidine 5'-phosphate decarboxylase (Caldicellulosiruptor saccharolyticus (strain ATCC 43494 / DSM 8903 / Tp8T 6331)).